Consider the following 764-residue polypeptide: MKMLRALLLCLSLVFFLAFQIVVSEIQLGSKLVVGENTLWVSNNGDFALGFFNPPGLLNRFSIGIWFNSNSIPYDQRKVVWVAGAGVVVSDNSSYFELTRNGELVLFDSLLGVPVWNSKTNRFSVSSALLRDDGNLVLLKDREEIVWQSFGTPTDTLLPNQKFPAFEMLRAASENSRSSYYSLHLEDSGRLELRWESNITFWSSGNEVVKKKKKKKNIGAVLTSEGALFLEDQDLMRPVWSVFGEDHNDTVKFRFLRLDRDGNLRMYSWNEDSRIWKPVWQAVENQCRVFATCGSQVCSFNSSGYTECNCPFNAFVSVSDPKCLVPYQKPGCKSGFNMVKFKNLELYGIYPANDSVISQISSQRCKKLCLENSACTAVTYTNDGEPQCRMKLTRYISGYSDPSLSSISYVKTCLDPIAVDPNNVSKESPVTVTKSHSICIPCLVGATSTTLVLFLGFQLGIVVYIYRRKKKLAKKKAERFSKATNPKGVMIFSVDEIKAMTDNFDNNIGPQIFKGVMPENELVAVKEVEATLTEERKFRSSASKIGTMHHKNLANLEGYCCELGRRFLVYEYAKNGSILDHIVDPLRSKKLTWRIRTDTCLSVAKALCYLHMECREFVSHGNLNCGNILLGEDLEAKLTEYGFGLCAADKDVEDFGKTVLALITGRYEPEGVVSEWVYREWIGGRKETVVDKGLEGCFDVEELERVLRISFWCVQTDERLRPSMGEVVKVLEGTLSVDPPPPPFACARSSPTNSSESSQSLYEP.

The N-terminal stretch at 1 to 24 (MKMLRALLLCLSLVFFLAFQIVVS) is a signal peptide. Bulb-type lectin domains lie at 25–151 (EIQL…QSFG) and 154–279 (TDTL…WKPV). Topologically, residues 25-442 (EIQLGSKLVV…TKSHSICIPC (418 aa)) are extracellular. N92, N198, and N248 each carry an N-linked (GlcNAc...) asparagine glycan. One can recognise an EGF-like; atypical domain in the interval 283 to 320 (VENQCRVFATCGSQVCSFNSSGYTECNCPFNAFVSVSD). 5 disulfides stabilise this stretch: C287–C298, C293–C308, C332–C413, C365–C388, and C369–C375. N-linked (GlcNAc...) asparagine glycans are attached at residues N301 and N353. Residues 332–413 (CKSGFNMVKF…LSSISYVKTC (82 aa)) enclose the Apple domain. The N-linked (GlcNAc...) asparagine glycan is linked to N423. A helical transmembrane segment spans residues 443 to 463 (LVGATSTTLVLFLGFQLGIVV). Topologically, residues 464-764 (YIYRRKKKLA…SESSQSLYEP (301 aa)) are cytoplasmic. One can recognise a Protein kinase domain in the interval 466–764 (YRRKKKLAKK…SESSQSLYEP (299 aa)). Residues 508 to 516 (IGPQIFKGV) and K526 contribute to the ATP site. The caM-binding stretch occupies residues 586–603 (LRSKKLTWRIRTDTCLSV). The disordered stretch occupies residues 738 to 764 (DPPPPPFACARSSPTNSSESSQSLYEP). A compositionally biased stretch (low complexity) spans 749 to 764 (SSPTNSSESSQSLYEP).

It localises to the cell membrane. It carries out the reaction L-seryl-[protein] + ATP = O-phospho-L-seryl-[protein] + ADP + H(+). It catalyses the reaction L-threonyl-[protein] + ATP = O-phospho-L-threonyl-[protein] + ADP + H(+). This Arabidopsis thaliana (Mouse-ear cress) protein is G-type lectin S-receptor-like serine/threonine-protein kinase SD3-1 (SD31).